Here is a 182-residue protein sequence, read N- to C-terminus: Isopentenyl-diphosphate Delta-isomerase (182 aa).

2 residues coordinate Mn(2+): His-25 and His-32. Residues 30–164 form the Nudix hydrolase domain; that stretch reads LLHLAFSSWL…PWAFSPWMVM (135 aa). The active site involves Cys-67. A Mn(2+)-binding site is contributed by His-69. Glu-87 is a binding site for Mg(2+). Mn(2+) contacts are provided by Glu-114 and Glu-116. Glu-116 is an active-site residue.

It belongs to the IPP isomerase type 1 family. Homodimer. Requires Mg(2+) as cofactor. The cofactor is Mn(2+).

Its subcellular location is the cytoplasm. The catalysed reaction is isopentenyl diphosphate = dimethylallyl diphosphate. It participates in isoprenoid biosynthesis; dimethylallyl diphosphate biosynthesis; dimethylallyl diphosphate from isopentenyl diphosphate: step 1/1. Functionally, catalyzes the 1,3-allylic rearrangement of the homoallylic substrate isopentenyl (IPP) to its highly electrophilic allylic isomer, dimethylallyl diphosphate (DMAPP). This is Isopentenyl-diphosphate Delta-isomerase from Shigella flexneri serotype 5b (strain 8401).